The sequence spans 559 residues: DNA ligase (559 aa).

E248 serves as a coordination point for ATP. K250 (N6-AMP-lysine intermediate) is an active-site residue. 6 residues coordinate ATP: R255, R270, E300, F341, R417, and K423.

It belongs to the ATP-dependent DNA ligase family. Mg(2+) is required as a cofactor.

The enzyme catalyses ATP + (deoxyribonucleotide)n-3'-hydroxyl + 5'-phospho-(deoxyribonucleotide)m = (deoxyribonucleotide)n+m + AMP + diphosphate.. Functionally, DNA ligase that seals nicks in double-stranded DNA during DNA replication, DNA recombination and DNA repair. The protein is DNA ligase of Methanopyrus kandleri (strain AV19 / DSM 6324 / JCM 9639 / NBRC 100938).